A 703-amino-acid polypeptide reads, in one-letter code: Zinc finger protein 750 (703 aa).

Residues 25–51 form a CCHC-type zinc finger; the sequence is YKCFQCPFTCNEKSHLFNHMKYGLCKN. Zn(2+) is bound by residues Cys27, Cys30, His43, and Cys49. Disordered stretches follow at residues 64 to 113, 350 to 527, 553 to 614, and 630 to 703; these read KCPK…DAKE, PASS…YGPM, WAPR…KQTA, and RVAD…TRVS. Residues 67 to 106 are compositionally biased toward polar residues; sequence KSSSLDPKQTHQPEPTSKPATSKSLLNGLSSFDPKSQQGS. Low complexity predominate over residues 352-361; that stretch reads SSPSELNLSS. Residues 367–394 show a composition bias toward basic and acidic residues; that stretch reads TECEKGSPVPEAKDPSKDGQRDAEEAKM. Composition is skewed to polar residues over residues 410–421 and 456–477; these read SPTNFTQTSQTF and GSES…SLQA. Basic and acidic residues predominate over residues 574-611; the sequence is TETKGSEDRTSRVETPQDKAHSRTTPDVHTEDSSDEQK. Positions 639-655 are enriched in polar residues; that stretch reads QEPTRQDVPTLSATENL.

The protein resides in the nucleus. Its function is as follows. Transcription factor involved in epidermis differentiation. Required for terminal epidermal differentiation: acts downstream of p63/TP63 and activates expression of late epidermal differentiation genes. Specifically binds to the promoter of KLF4 and promotes its expression. This chain is Zinc finger protein 750 (Znf750), found in Mus musculus (Mouse).